A 234-amino-acid polypeptide reads, in one-letter code: Carboxy-S-adenosyl-L-methionine synthase (234 aa).

S-adenosyl-L-methionine contacts are provided by residues Y35, 60-62 (GCS), 83-84 (DN), and R191.

The protein belongs to the class I-like SAM-binding methyltransferase superfamily. Cx-SAM synthase family. As to quaternary structure, homodimer.

It catalyses the reaction prephenate + S-adenosyl-L-methionine = carboxy-S-adenosyl-L-methionine + 3-phenylpyruvate + H2O. In terms of biological role, catalyzes the conversion of S-adenosyl-L-methionine (SAM) to carboxy-S-adenosyl-L-methionine (Cx-SAM). The polypeptide is Carboxy-S-adenosyl-L-methionine synthase (Campylobacter lari (strain RM2100 / D67 / ATCC BAA-1060)).